The primary structure comprises 585 residues: Protein FAM13C (585 aa).

Disordered stretches follow at residues 26 to 45, 83 to 138, and 171 to 216; these read PVSL…ENNK, SMGN…NAFK, and EAAQ…APED. Basic and acidic residues-rich tracts occupy residues 27 to 45 and 99 to 112; these read VSLH…ENNK and ESGR…ETEH. S131 is subject to Phosphoserine. At S238 the chain carries Phosphoserine. Disordered regions lie at residues 250-282, 349-391, and 441-477; these read FNLD…DGKE, EEQG…EETP, and IPTI…DHLT. Residues 262–275 show a composition bias toward polar residues; the sequence is STQQFMMPRSSSRC. S385 and S386 each carry phosphoserine.

The protein belongs to the FAM13 family.

In Homo sapiens (Human), this protein is Protein FAM13C (FAM13C).